The sequence spans 513 residues: Xylose import ATP-binding protein XylG (513 aa).

ABC transporter domains lie at Leu-5 to Glu-242 and Leu-259 to Glu-505. Gly-37 to Ser-44 contributes to the ATP binding site.

The protein belongs to the ABC transporter superfamily. Xylose importer (TC 3.A.1.2.4) family. As to quaternary structure, the complex is composed of two ATP-binding proteins (XylG), two transmembrane proteins (XylH) and a solute-binding protein (XylF).

It is found in the cell inner membrane. The enzyme catalyses D-xylose(out) + ATP + H2O = D-xylose(in) + ADP + phosphate + H(+). Functionally, part of the ABC transporter complex XylFGH involved in xylose import. Responsible for energy coupling to the transport system. In Shigella boydii serotype 4 (strain Sb227), this protein is Xylose import ATP-binding protein XylG.